A 258-amino-acid polypeptide reads, in one-letter code: tRNA (guanine-N(1)-)-methyltransferase (258 aa).

Residues glycine 122 and 142–147 (LGDFVL) each bind S-adenosyl-L-methionine.

The protein belongs to the RNA methyltransferase TrmD family. As to quaternary structure, homodimer.

The protein localises to the cytoplasm. It catalyses the reaction guanosine(37) in tRNA + S-adenosyl-L-methionine = N(1)-methylguanosine(37) in tRNA + S-adenosyl-L-homocysteine + H(+). Specifically methylates guanosine-37 in various tRNAs. The protein is tRNA (guanine-N(1)-)-methyltransferase of Hahella chejuensis (strain KCTC 2396).